A 200-amino-acid chain; its full sequence is Proteasome subunit beta 2 (200 aa).

Positions 1 to 7 are cleaved as a propeptide — removed in mature form; by autocatalysis; the sequence is MEEKKTG. The active-site Nucleophile is the threonine 8.

Belongs to the peptidase T1B family. As to quaternary structure, the 20S proteasome core is composed of 14 alpha and 14 beta subunits that assemble into four stacked heptameric rings, resulting in a barrel-shaped structure. The two inner rings, each composed of seven catalytic beta subunits, are sandwiched by two outer rings, each composed of seven alpha subunits. The catalytic chamber with the active sites is on the inside of the barrel. Has a gated structure, the ends of the cylinder being occluded by the N-termini of the alpha-subunits. Is capped at one or both ends by the proteasome regulatory ATPase, PAN.

The protein resides in the cytoplasm. The catalysed reaction is Cleavage of peptide bonds with very broad specificity.. Its activity is regulated as follows. The formation of the proteasomal ATPase PAN-20S proteasome complex, via the docking of the C-termini of PAN into the intersubunit pockets in the alpha-rings, triggers opening of the gate for substrate entry. Interconversion between the open-gate and close-gate conformations leads to a dynamic regulation of the 20S proteasome proteolysis activity. Its function is as follows. Component of the proteasome core, a large protease complex with broad specificity involved in protein degradation. The polypeptide is Proteasome subunit beta 2 (Thermococcus gammatolerans (strain DSM 15229 / JCM 11827 / EJ3)).